The sequence spans 575 residues: Beta-amylase (575 aa).

The signal sequence occupies residues 1 to 36; the sequence is MLHSQKRIWKKIGLCLLSFILGITVFTGSFGSKAEA. D77 is a binding site for substrate. The Ca(2+) site is built by E84 and D88. H117 and D125 together coordinate substrate. A disulfide bridge links C119 with C127. E171 is a Ca(2+) binding site. The Proton donor role is filled by E199. The substrate site is built by K315, H320, and T358. The active-site Proton acceptor is E395. Substrate is bound by residues 396-397 and R424; that span reads NA.

Belongs to the glycosyl hydrolase 14 family. As to quaternary structure, monomer. Ca(2+) serves as cofactor.

The enzyme catalyses Hydrolysis of (1-&gt;4)-alpha-D-glucosidic linkages in polysaccharides so as to remove successive maltose units from the non-reducing ends of the chains.. The chain is Beta-amylase from Niallia circulans (Bacillus circulans).